Consider the following 88-residue polypeptide: uncharacterized protein (88 aa).

A signal peptide spans 1–22 (MGLTLKEHAEVCMALAESSASA).

This is an uncharacterized protein from Haemophilus influenzae (strain ATCC 51907 / DSM 11121 / KW20 / Rd).